The chain runs to 89 residues: HssA/B-like protein 16 (89 aa).

The protein belongs to the hssA/B family.

The chain is HssA/B-like protein 16 (hssl16) from Dictyostelium discoideum (Social amoeba).